We begin with the raw amino-acid sequence, 266 residues long: uncharacterized protein (266 aa).

Residues 35–131 (VLVGEGVLVK…WMLHIERCVT (97 aa)) form the PH domain. The FYVE-type zinc finger occupies 152–212 (DGEAVKCMVC…VCDHCFDSLS (61 aa)). C158, C161, C175, C178, C183, C186, C204, and C207 together coordinate Zn(2+). A disordered region spans residues 213 to 266 (SATPGQEESEPKTGNRLHHEDSSSDSEDEVNGSGRSSNESRPTFYREDVQQPAT). Basic and acidic residues-rich tracts occupy residues 221–234 (SEPKTGNRLHHEDS) and 256–266 (FYREDVQQPAT).

This is an uncharacterized protein from Caenorhabditis elegans.